The chain runs to 305 residues: tRNA dimethylallyltransferase (305 aa).

Residue 8-15 (GPTAVGKT) participates in ATP binding. Position 10 to 15 (10 to 15 (TAVGKT)) interacts with substrate. An interaction with substrate tRNA region spans residues 33–36 (DSRQ).

Belongs to the IPP transferase family. In terms of assembly, monomer. Mg(2+) serves as cofactor.

It catalyses the reaction adenosine(37) in tRNA + dimethylallyl diphosphate = N(6)-dimethylallyladenosine(37) in tRNA + diphosphate. Functionally, catalyzes the transfer of a dimethylallyl group onto the adenine at position 37 in tRNAs that read codons beginning with uridine, leading to the formation of N6-(dimethylallyl)adenosine (i(6)A). The chain is tRNA dimethylallyltransferase from Thermotoga neapolitana (strain ATCC 49049 / DSM 4359 / NBRC 107923 / NS-E).